Consider the following 101-residue polypeptide: MKTKLKVGDNVKILCGKDRGKTGEIVSIDRKNLKVVVKSCNMVKKVIKARTPQEKSKIIDKEAPVDISNVMLFSNGITSRVGIKFENKEKKRYLKKNGENV.

The protein belongs to the universal ribosomal protein uL24 family. As to quaternary structure, part of the 50S ribosomal subunit.

In terms of biological role, one of two assembly initiator proteins, it binds directly to the 5'-end of the 23S rRNA, where it nucleates assembly of the 50S subunit. Functionally, one of the proteins that surrounds the polypeptide exit tunnel on the outside of the subunit. This is Large ribosomal subunit protein uL24 from Borrelia hermsii (strain HS1 / DAH).